Reading from the N-terminus, the 191-residue chain is Ribonuclease HII (191 aa).

In terms of domain architecture, RNase H type-2 spans 4 to 191; it reads YTAAGLDEVG…HRKTFLSKIQ (188 aa). Residues aspartate 10, glutamate 11, and aspartate 106 each contribute to the a divalent metal cation site.

This sequence belongs to the RNase HII family. It depends on Mn(2+) as a cofactor. Requires Mg(2+) as cofactor.

It is found in the cytoplasm. It catalyses the reaction Endonucleolytic cleavage to 5'-phosphomonoester.. Its function is as follows. Endonuclease that specifically degrades the RNA of RNA-DNA hybrids. This Prochlorococcus marinus (strain SARG / CCMP1375 / SS120) protein is Ribonuclease HII.